A 184-amino-acid polypeptide reads, in one-letter code: Acireductone dioxygenase 4 (184 aa).

Fe(2+) is bound by residues histidine 86, histidine 88, glutamate 92, and histidine 131. Ni(2+) contacts are provided by histidine 86, histidine 88, glutamate 92, and histidine 131.

This sequence belongs to the acireductone dioxygenase (ARD) family. The cofactor is Fe(2+). Ni(2+) is required as a cofactor.

The protein resides in the cytoplasm. It is found in the nucleus. The catalysed reaction is 1,2-dihydroxy-5-(methylsulfanyl)pent-1-en-3-one + O2 = 4-methylsulfanyl-2-oxobutanoate + formate + 2 H(+). It catalyses the reaction 1,2-dihydroxy-5-(methylsulfanyl)pent-1-en-3-one + O2 = 3-(methylsulfanyl)propanoate + CO + formate + 2 H(+). It participates in amino-acid biosynthesis; L-methionine biosynthesis via salvage pathway; L-methionine from S-methyl-5-thio-alpha-D-ribose 1-phosphate: step 5/6. In terms of biological role, catalyzes 2 different reactions between oxygen and the acireductone 1,2-dihydroxy-3-keto-5-methylthiopentene (DHK-MTPene) depending upon the metal bound in the active site. Fe-containing acireductone dioxygenase (Fe-ARD) produces formate and 2-keto-4-methylthiobutyrate (KMTB), the alpha-ketoacid precursor of methionine in the methionine recycle pathway. Ni-containing acireductone dioxygenase (Ni-ARD) produces methylthiopropionate, carbon monoxide and formate, and does not lie on the methionine recycle pathway. The polypeptide is Acireductone dioxygenase 4 (ARD4) (Oryza sativa subsp. japonica (Rice)).